We begin with the raw amino-acid sequence, 324 residues long: Annexin A10 (324 aa).

4 Annexin repeats span residues 17 to 88 (FNPM…GLMY), 89 to 160 (PPPS…NLVQ), 171 to 243 (AMAA…AIVR), and 247 to 318 (DKPS…AICA).

This sequence belongs to the annexin family.

This is Annexin A10 (Anxa10) from Mus musculus (Mouse).